Reading from the N-terminus, the 564-residue chain is Formate--tetrahydrofolate ligase (564 aa).

69 to 76 (TPAGEGKS) is an ATP binding site.

This sequence belongs to the formate--tetrahydrofolate ligase family.

The enzyme catalyses (6S)-5,6,7,8-tetrahydrofolate + formate + ATP = (6R)-10-formyltetrahydrofolate + ADP + phosphate. It participates in one-carbon metabolism; tetrahydrofolate interconversion. The polypeptide is Formate--tetrahydrofolate ligase (Renibacterium salmoninarum (strain ATCC 33209 / DSM 20767 / JCM 11484 / NBRC 15589 / NCIMB 2235)).